The sequence spans 1325 residues: Clustered mitochondria protein homolog (1325 aa).

The Clu domain occupies 311-573 (PKHESDPMRT…RHTPMDVTWL (263 aa)). Disordered stretches follow at residues 893–937 (KHAE…PLRT), 1032–1063 (DSNQ…DDQL), and 1245–1325 (QHAR…AKRS). Basic residues predominate over residues 1265-1275 (SAHHHHHRHLH). Over residues 1276–1285 (QQQQNSSSSP) the composition is skewed to low complexity. Over residues 1314-1325 (AARKRAARAKRS) the composition is skewed to basic residues.

The protein belongs to the CLU family. As to quaternary structure, may associate with the eukaryotic translation initiation factor 3 (eIF-3) complex.

The protein localises to the cytoplasm. Functionally, mRNA-binding protein involved in proper cytoplasmic distribution of mitochondria. This is Clustered mitochondria protein homolog from Malassezia globosa (strain ATCC MYA-4612 / CBS 7966) (Dandruff-associated fungus).